A 233-amino-acid chain; its full sequence is Superoxide dismutase [Mn] 3.3, mitochondrial (233 aa).

The N-terminal 29 residues, 1-29 (MALRTLASKNALSFALGGAARPSAESARG), are a transit peptide targeting the mitochondrion. Positions 57, 105, 194, and 198 each coordinate Mn(2+).

It belongs to the iron/manganese superoxide dismutase family. Homotetramer. Mn(2+) serves as cofactor. In terms of tissue distribution, predominantly expressed in the embryo late in embryogenesis.

Its subcellular location is the mitochondrion matrix. The catalysed reaction is 2 superoxide + 2 H(+) = H2O2 + O2. In terms of biological role, destroys superoxide anion radicals which are normally produced within the cells and which are toxic to biological systems. This chain is Superoxide dismutase [Mn] 3.3, mitochondrial (SODA.2), found in Zea mays (Maize).